The chain runs to 258 residues: MLIVISPAKTLDYQSPLATKKFTQPEMLDKSQQLIEICRELTPAQISSLMGISDKLAGLNAARFSEWQPDFTPDNARQAILAFKGDVYTGMQAQDFSAADFDFAQQHLRMLSGLYGVLRPLDLMQPYRLEMGIKLANPGGKDLYSFWGDQITEKLNQALEQQGDNVLINLASDEYFKAVKPAKLAGSLIKPVFLDEKNGKYKIISFYAKKARGLMSRFIIQNKLTKPEQLVDFNLEGYEFDAGLSAKNELVFKRAEQF.

Belongs to the UPF0246 family.

The protein is UPF0246 protein YE0603 of Yersinia enterocolitica serotype O:8 / biotype 1B (strain NCTC 13174 / 8081).